Consider the following 345-residue polypeptide: MQLEIQVALNFIISYLYNKLPRRRVNIFGEELERLLKKKYEGHWYPEKPYKGSGFRCIHIGEKVDPVIEQASKESGLDIDDVRGNLPQDLSVWIDPFEVSYQIGEKGPVKVLYVDDNNENGCELDKEIKNSFNPEAQVFMPISDPASSVSSSPSPPFGHSAAVSPTFMPRSTQPLTFTTATFAATKFGSTKMKNSGRSNKVARTSPINLGLNVNDLLKQKAISSSMHSLYGLGLGSQQQPQQQQQPAQPPPPPPPPQQQQQQKTSALSPNAKEFIFPNMQGQGSSTNGMFPGDSPLNLSPLQYSNAFDVFAAYGGLNEKSFVDGLNFSLNNMQYSNQQFQPVMAN.

Positions 22–39 match the Bipartite nuclear localization signal motif; the sequence is RRRVNIFGEELERLLKKK. Positions 82 to 92 are important for nuclear localization; the sequence is VRGNLPQDLSV. Residues 144–160 show a composition bias toward low complexity; it reads DPASSVSSSPSPPFGHS. Residues 144-171 are disordered; it reads DPASSVSSSPSPPFGHSAAVSPTFMPRS. A required for interaction with CPEB3 region spans residues 161–218; that stretch reads AAVSPTFMPRSTQPLTFTTATFAATKFGSTKMKNSGRSNKVARTSPINLGLNVNDLLK. Position 204 is a phosphothreonine (T204). The Nuclear export signal signature appears at 226–234; it reads MHSLYGLGL. The interval 231 to 267 is disordered; that stretch reads GLGLGSQQQPQQQQQPAQPPPPPPPPQQQQQQKTSAL. Low complexity predominate over residues 237–246; that stretch reads QQQPQQQQQP. Pro residues predominate over residues 247–257; sequence AQPPPPPPPPQ.

Belongs to the BTG family. Interacts with ERBB2. Interacts with CNOT7. Interacts with CPEB3 (via C-terminal RNA-binding region); recruits CNOT7 to CPEB3 to form a ternary complex required for mRNA deadenylation and decay. Interacts with CNOT8. Interacts with CPEB4. Post-translationally, phosphorylated on Ser and Thr residues. As to expression, ubiquitous.

The protein localises to the cytoplasm. The protein resides in the nucleus. Anti-proliferative protein; the function is mediated by association with deadenylase subunits of the CCR4-NOT complex. Mediates CPEB3-accelerated mRNA deadenylation by binding to CPEB3 and recruiting CNOT7 which leads to target mRNA deadenylation and decay. In Homo sapiens (Human), this protein is Protein Tob1 (TOB1).